The following is a 197-amino-acid chain: dITP/XTP pyrophosphatase (197 aa).

8 to 13 (TGNAGK) is a binding site for substrate. The Mg(2+) site is built by Glu-40 and Asp-69. The active-site Proton acceptor is the Asp-69. Residues Ser-70, 154–157 (FGYD), Lys-177, and 182–183 (HR) contribute to the substrate site.

Belongs to the HAM1 NTPase family. Homodimer. The cofactor is Mg(2+).

It carries out the reaction XTP + H2O = XMP + diphosphate + H(+). The catalysed reaction is dITP + H2O = dIMP + diphosphate + H(+). The enzyme catalyses ITP + H2O = IMP + diphosphate + H(+). In terms of biological role, pyrophosphatase that catalyzes the hydrolysis of nucleoside triphosphates to their monophosphate derivatives, with a high preference for the non-canonical purine nucleotides XTP (xanthosine triphosphate), dITP (deoxyinosine triphosphate) and ITP. Seems to function as a house-cleaning enzyme that removes non-canonical purine nucleotides from the nucleotide pool, thus preventing their incorporation into DNA/RNA and avoiding chromosomal lesions. The chain is dITP/XTP pyrophosphatase (rdgB) from Salmonella paratyphi A (strain ATCC 9150 / SARB42).